Consider the following 325-residue polypeptide: MNAFTQIDELVMPLPLEPQGYTIAPSKQSPRLLELTFARETVEAFVQAVAQWPVQALEYKSFLRFRVGEILDELCQGTLRPVLLNTILDRATGGMLITPIGLDDVSQAEDMVKFTTACAHLIGRSNYDAMSGQFYARFVVVNSDNSDSYLRQPHRVMELHNDGTFVNQITDYVLMLKIDEKNMEGGNSLLLHLDDWEQCEAFFRHPLARREMRWTAPPSKKVAEDVFHSVFDTDAEGRPTMRYIDQFVQPENYEEGIWLNALSESLEGSGKKVSVPVGVGSFLLINNLFWLHGRDRFTPHEGLRRELMRQRGYVAFPKPLYQRGQ.

Positions 160, 162, and 292 each coordinate Fe cation.

Belongs to the glutarate hydroxylase family. Homotetramer. Fe(2+) is required as a cofactor.

It carries out the reaction glutarate + 2-oxoglutarate + O2 = (S)-2-hydroxyglutarate + succinate + CO2. It functions in the pathway amino-acid degradation. Acts as an alpha-ketoglutarate-dependent dioxygenase catalyzing hydroxylation of glutarate (GA) to L-2-hydroxyglutarate (L2HG). Functions in a L-lysine degradation pathway that proceeds via cadaverine, glutarate and L-2-hydroxyglutarate. Is extremely specific for glutarate, but it can use both 2-oxoglutarate and 2-oxoadipate (2OA) as a cosubstrate for L2HG formation. The polypeptide is Glutarate 2-hydroxylase (Pseudomonas putida (strain ATCC 47054 / DSM 6125 / CFBP 8728 / NCIMB 11950 / KT2440)).